A 374-amino-acid polypeptide reads, in one-letter code: Glyceraldehyde-3-phosphate dehydrogenase A, chloroplastic (374 aa).

Residues 1–34 constitute a chloroplast transit peptide; that stretch reads MAAMMQKSAFTGSAVSSKSGVRAKAARAVVDVRA. NADP(+) is bound by residues 47-48, aspartate 71, and arginine 116; that span reads RI. A disulfide bridge links cysteine 55 with cysteine 325. D-glyceraldehyde 3-phosphate-binding positions include 189–191, threonine 220, arginine 235, 248–249, and arginine 271; these read SCT and TG. Catalysis depends on cysteine 190, which acts as the Nucleophile. Asparagine 353 is a binding site for NADP(+).

The protein belongs to the glyceraldehyde-3-phosphate dehydrogenase family. In terms of assembly, homotetramer. Component of a complex that contains two dimers of PRK, two tetramers of GAPDH and CP12. CP12 associates with GAPDH, causing its conformation to change. This GAPDH/CP12 complex binds PRK to form a half-complex (one unit). This unit probably dimerizes due partially to interactions between the enzymes of each unit.

The protein resides in the plastid. It localises to the chloroplast. It catalyses the reaction D-glyceraldehyde 3-phosphate + phosphate + NADP(+) = (2R)-3-phospho-glyceroyl phosphate + NADPH + H(+). It participates in carbohydrate biosynthesis; Calvin cycle. The sequence is that of Glyceraldehyde-3-phosphate dehydrogenase A, chloroplastic (GAPA) from Chlamydomonas reinhardtii (Chlamydomonas smithii).